We begin with the raw amino-acid sequence, 204 residues long: N-(5'-phosphoribosyl)anthranilate isomerase (204 aa).

It belongs to the TrpF family.

It catalyses the reaction N-(5-phospho-beta-D-ribosyl)anthranilate = 1-(2-carboxyphenylamino)-1-deoxy-D-ribulose 5-phosphate. The protein operates within amino-acid biosynthesis; L-tryptophan biosynthesis; L-tryptophan from chorismate: step 3/5. This Geobacter sp. (strain M21) protein is N-(5'-phosphoribosyl)anthranilate isomerase.